A 142-amino-acid polypeptide reads, in one-letter code: Neuritin (142 aa).

The signal sequence occupies residues 1-27 (MGLKLNGRYISLILAVQIAYLVQAVRA). The GPI-anchor amidated glycine moiety is linked to residue glycine 116. The propeptide at 117–142 (AAGSLLPAFPVLLVSLSAALATWLSF) is removed in mature form.

It belongs to the neuritin family. Component of the outer core of AMPAR complex. AMPAR complex consists of an inner core made of 4 pore-forming GluA/GRIA proteins (GRIA1, GRIA2, GRIA3 and GRIA4) and 4 major auxiliary subunits arranged in a twofold symmetry. One of the two pairs of distinct binding sites is occupied either by CNIH2, CNIH3 or CACNG2, CACNG3. The other harbors CACNG2, CACNG3, CACNG4, CACNG8 or GSG1L. This inner core of AMPAR complex is complemented by outer core constituents binding directly to the GluA/GRIA proteins at sites distinct from the interaction sites of the inner core constituents. Outer core constituents include at least PRRT1, PRRT2, CKAMP44/SHISA9, FRRS1L and NRN1. The proteins of the inner and outer core serve as a platform for other, more peripherally associated AMPAR constituents. Alone or in combination, these auxiliary subunits control the gating and pharmacology of the AMPAR complex and profoundly impact their biogenesis and protein processing.

Its subcellular location is the cell membrane. The protein resides in the synapse. In terms of biological role, promotes neurite outgrowth and especially branching of neuritic processes in primary hippocampal and cortical cells. In Homo sapiens (Human), this protein is Neuritin (NRN1).